The primary structure comprises 251 residues: HTH-type transcriptional regulator UlaR (251 aa).

In terms of domain architecture, HTH deoR-type spans 3 to 58 (EAQRHQILLEMLAQLGFVTVEKVVERLGISPATARRDINKLGESGKLKKVRNGAEA). A DNA-binding region (H-T-H motif) is located at residues 20–39 (VTVEKVVERLGISPATARRD).

The protein localises to the cytoplasm. Functionally, represses ulaG and the ulaABCDEF operon. The sequence is that of HTH-type transcriptional regulator UlaR from Shigella flexneri.